Reading from the N-terminus, the 150-residue chain is Large ribosomal subunit protein bL9 (150 aa).

Belongs to the bacterial ribosomal protein bL9 family.

Binds to the 23S rRNA. The sequence is that of Large ribosomal subunit protein bL9 from Pectobacterium carotovorum subsp. carotovorum (strain PC1).